We begin with the raw amino-acid sequence, 841 residues long: Phosphatidylglycerol lysyltransferase (841 aa).

Topologically, residues 1-8 (MTKELRSK) are cytoplasmic. The chain crosses the membrane as a helical span at residues 9–29 (LFTILKIAFALTLFTIVAITL). Topologically, residues 30–52 (YKELSHINLKDAIKSFSKINRFW) are extracellular. A helical membrane pass occupies residues 53-73 (LVALFLSGGASIIVLSIYDVI). Residues 74–89 (LAKTLKLKIGLAKTIR) are Cytoplasmic-facing. The helical transmembrane segment at 90 to 110 (IGYIVNALNAVVGFGGFIGAS) threads the bilayer. The Extracellular portion of the chain corresponds to 111-129 (VRFLFYKNTTDDKKALFHT). The chain crosses the membrane as a helical span at residues 130–150 (ISIVLISMLTGLSLLSILVVI). The Cytoplasmic portion of the chain corresponds to 151–164 (HVFDISHIFTPYPW). A helical transmembrane segment spans residues 165-185 (VKWLMYVVALFLPIFVVFTII). Residues 186–193 (KPVQKTHR) lie on the Extracellular side of the membrane. The helical transmembrane segment at 194 to 216 (LLGVYCTIVSGVEWFVAALVLYM) threads the bilayer. Topologically, residues 217-229 (SMAIVGVQIPFAT) are cytoplasmic. Residues 230–250 (FMGIFILAALSGLISFIPGGF) traverse the membrane as a helical segment. The Extracellular segment spans residues 251-270 (GTFDLVVLLGLKALNVNEEA). The helical transmembrane segment at 271–291 (IVLGLSLYRFAYYLFPVLIAL) threads the bilayer. Over 292–336 (ILSTFEFRSTAKRYWEDSRILVPVKDMTSLLGSYQKDIIARIPSF) the chain is Cytoplasmic. A helical membrane pass occupies residues 337–357 (AIALLLLFTSLVFFLNNLTII). Topologically, residues 358 to 367 (YDGLYDPNHY) are extracellular. Residues 368–388 (IYYIIVSIHTCACLLLLLNVI) form a helical membrane-spanning segment. At 389-392 (GVYK) the chain is on the cytoplasmic side. A helical transmembrane segment spans residues 393–413 (LSKRAILFSIISVLFIFIATA). Residues 414 to 415 (YT) lie on the Extracellular side of the membrane. A helical transmembrane segment spans residues 416–436 (YASFILLSWLTVIFILLLVFY). The Cytoplasmic portion of the chain corresponds to 437 to 448 (RRARVIKRPFRY). Residues 449-469 (SKLLLSVITGAIILYINHLVI) traverse the membrane as a helical segment. The Extracellular segment spans residues 470–489 (KSTFYSLEIYHIEMLTSILR). The helical transmembrane segment at 490–510 (YYFWITILLVAIIVGVIVWWF) threads the bilayer. Residues 511 to 841 (EYRYRSSNSR…KVMRVIRKNN (331 aa)) are Cytoplasmic-facing.

This sequence belongs to the LPG synthase family.

It is found in the cell membrane. The enzyme catalyses L-lysyl-tRNA(Lys) + a 1,2-diacyl-sn-glycero-3-phospho-(1'-sn-glycerol) = a 1,2-diacyl-sn-glycero-3-phospho-1'-(3'-O-L-lysyl)-sn-glycerol + tRNA(Lys). Functionally, catalyzes the transfer of a lysyl group from L-lysyl-tRNA(Lys) to membrane-bound phosphatidylglycerol (PG), which produces lysylphosphatidylglycerol (LPG), a major component of the bacterial membrane with a positive net charge. LPG synthesis contributes to bacterial virulence as it is involved in the resistance mechanism against cationic antimicrobial peptides (CAMP) produces by the host's immune system (defensins, cathelicidins) and by the competing microorganisms (bacteriocins). In fact, the modification of anionic phosphatidylglycerol with positively charged L-lysine results in repulsion of the peptides. This chain is Phosphatidylglycerol lysyltransferase (mprF), found in Staphylococcus xylosus.